Consider the following 1072-residue polypeptide: Serine/threonine-protein kinase 11-interacting protein (1072 aa).

LRR repeat units follow at residues 109 to 130 (SLRQLELRGVPIHSLCGLRGIY), 132 to 152 (QLESLVCNRSIQALEELLSAC), 164 to 185 (ALLSADFSYNALRSLDSSLRLL), 187 to 209 (ALRFLNLSHNHLQDCKGFLMDLC), 210 to 231 (ELYHLDISYNHLRLVPRVGPSG), 233 to 254 (ALGTLILRANELRSLQGLEQLK), 255 to 276 (NLRHLDVAYNLLEGHTELAPLW), and 280 to 301 (ELRKLYLEGNPLWFHPAHRAAT). Residues 333–366 (DSSGLGPVIQPLSWPVGSTTETSGGPELSDSLSS) are disordered. Phosphoserine occurs at positions 388, 390, and 393. Over residues 441–454 (MGSSPLSTTKTPAL) the composition is skewed to polar residues. 2 disordered regions span residues 441 to 522 (MGSS…EQKA) and 741 to 762 (RPDGIPPQTSISHDRSSWSLSP). Basic and acidic residues-rich tracts occupy residues 478 to 492 (KESPEKVSEEGRVEP) and 501 to 510 (EQDKEEGSRE). Residues Ser757, Ser761, and Ser763 each carry the phosphoserine modification. The disordered stretch occupies residues 967–993 (HAESPLPVVSDETSEQPASLGPGPSLQ).

It belongs to the STK11IP family. As to quaternary structure, found in a ternary complex composed of STK11/LKB1, STK11IP and SMAD4. Interacts with SMAD4. Interacts with STK11/LKB1.

It is found in the cytoplasm. May regulate STK11/LKB1 function by controlling its subcellular localization. The sequence is that of Serine/threonine-protein kinase 11-interacting protein (Stk11ip) from Mus musculus (Mouse).